A 481-amino-acid chain; its full sequence is 3-isopropylmalate dehydratase large subunit (481 aa).

Positions 357, 417, and 420 each coordinate [4Fe-4S] cluster.

Belongs to the aconitase/IPM isomerase family. LeuC type 1 subfamily. As to quaternary structure, heterodimer of LeuC and LeuD. Requires [4Fe-4S] cluster as cofactor.

It carries out the reaction (2R,3S)-3-isopropylmalate = (2S)-2-isopropylmalate. Its pathway is amino-acid biosynthesis; L-leucine biosynthesis; L-leucine from 3-methyl-2-oxobutanoate: step 2/4. In terms of biological role, catalyzes the isomerization between 2-isopropylmalate and 3-isopropylmalate, via the formation of 2-isopropylmaleate. This is 3-isopropylmalate dehydratase large subunit from Mycolicibacterium vanbaalenii (strain DSM 7251 / JCM 13017 / BCRC 16820 / KCTC 9966 / NRRL B-24157 / PYR-1) (Mycobacterium vanbaalenii).